Consider the following 472-residue polypeptide: Proline--tRNA ligase (472 aa).

This sequence belongs to the class-II aminoacyl-tRNA synthetase family. ProS type 3 subfamily. In terms of assembly, homodimer.

It is found in the cytoplasm. The enzyme catalyses tRNA(Pro) + L-proline + ATP = L-prolyl-tRNA(Pro) + AMP + diphosphate. In terms of biological role, catalyzes the attachment of proline to tRNA(Pro) in a two-step reaction: proline is first activated by ATP to form Pro-AMP and then transferred to the acceptor end of tRNA(Pro). In Ureaplasma parvum serovar 3 (strain ATCC 27815 / 27 / NCTC 11736), this protein is Proline--tRNA ligase.